Here is a 666-residue protein sequence, read N- to C-terminus: Calmodulin-binding receptor kinase CaMRLK (666 aa).

A signal peptide spans 1–17 (MFLKLFLLLSLVSFSHS). Over 18–297 (DSSSTVSCPN…KTHRTNHTPL (280 aa)) the chain is Extracellular. N-linked (GlcNAc...) asparagine glycans are attached at residues N27, N45, N52, N68, N78, N89, N110, N126, N137, N148, N154, N189, N212, N229, and N261. LRR repeat units follow at residues 79–103 (LTRL…LWSM), 105–127 (GLVS…PVNG), 130–152 (LSAV…FTGF), 153–177 (TNLT…SLSG), 178–197 (LRHL…PISG), 198–224 (LKSL…NLNH), and 226–246 (QFLN…KYRK). The chain crosses the membrane as a helical span at residues 298-318 (VIGLSSSLGALIIVIFAAAII). Residues 319-337 (LIRRRMKSARTKSRWAISN) form a calmodulin binding region. The Cytoplasmic portion of the chain corresponds to 319 to 666 (LIRRRMKSAR…LLKDIRTVSR (348 aa)). Residues 395–661 (FGTESVISDG…QQVLGLLKDI (267 aa)) enclose the Protein kinase domain. ATP is bound by residues 401–409 (ISDGTCGPL) and K423.

The protein belongs to the protein kinase superfamily. Ser/Thr protein kinase family. In terms of assembly, binds calmodulin (CaM) in a calcium-dependent manner. Interacts with CAM1, but not with CAM8. The cofactor is Mn(2+). Requires Mg(2+) as cofactor. Post-translationally, calmodulin (CaM)-independent autophosphorylation. In terms of tissue distribution, expressed in reproductive and vegetative tissues, with higher levels in seedlings and flowers, but not in leaves.

It is found in the cell membrane. It catalyses the reaction L-seryl-[protein] + ATP = O-phospho-L-seryl-[protein] + ADP + H(+). The catalysed reaction is L-threonyl-[protein] + ATP = O-phospho-L-threonyl-[protein] + ADP + H(+). Not stimulated by calmodulin (CaM). In terms of biological role, can phosphorylate the myelin basic protein in vitro. Required for endosperm development in embryos. Maybe involved in auxin and osmotic stress responses. This is Calmodulin-binding receptor kinase CaMRLK from Arabidopsis thaliana (Mouse-ear cress).